A 142-amino-acid chain; its full sequence is Large ribosomal subunit protein bL21 (142 aa).

Basic residues predominate over residues 73-84 (KRRRQNSKRTRG). Residues 73–142 (KRRRQNSKRT…KAAAKAESAE (70 aa)) are disordered. Basic and acidic residues predominate over residues 107-125 (KAAEKKAPKADAAEGEAAK). The span at 126–135 (PKKAAPKKAA) shows a compositional bias: basic residues.

Belongs to the bacterial ribosomal protein bL21 family. In terms of assembly, part of the 50S ribosomal subunit. Contacts protein L20.

In terms of biological role, this protein binds to 23S rRNA in the presence of protein L20. This chain is Large ribosomal subunit protein bL21, found in Brucella canis (strain ATCC 23365 / NCTC 10854 / RM-666).